The sequence spans 163 residues: Probable histone H2A.4 (163 aa).

Disordered stretches follow at residues 1-30 (MEVGAKVPKKAGAGGRRGGGGPKKKPVSRS) and 134-163 (SAAAKEAKEGKTPKSPKKATTKSPKKAAAA). Over residues 12–21 (GAGGRRGGGG) the composition is skewed to gly residues. A compositionally biased stretch (basic residues) spans 147–163 (KSPKKATTKSPKKAAAA). 2 consecutive short sequence motifs (SPKK motif) follow at residues 148 to 151 (SPKK) and 156 to 159 (SPKK).

The protein belongs to the histone H2A family. In terms of assembly, the nucleosome is a histone octamer containing two molecules each of H2A, H2B, H3 and H4 assembled in one H3-H4 heterotetramer and two H2A-H2B heterodimers. The octamer wraps approximately 147 bp of DNA.

The protein resides in the nucleus. Its subcellular location is the chromosome. Its function is as follows. Core component of nucleosome. Nucleosomes wrap and compact DNA into chromatin, limiting DNA accessibility to the cellular machineries which require DNA as a template. Histones thereby play a central role in transcription regulation, DNA repair, DNA replication and chromosomal stability. DNA accessibility is regulated via a complex set of post-translational modifications of histones, also called histone code, and nucleosome remodeling. The polypeptide is Probable histone H2A.4 (Oryza sativa subsp. indica (Rice)).